The following is a 101-amino-acid chain: Putative pterin-4-alpha-carbinolamine dehydratase (101 aa).

Belongs to the pterin-4-alpha-carbinolamine dehydratase family.

It catalyses the reaction (4aS,6R)-4a-hydroxy-L-erythro-5,6,7,8-tetrahydrobiopterin = (6R)-L-erythro-6,7-dihydrobiopterin + H2O. The polypeptide is Putative pterin-4-alpha-carbinolamine dehydratase (Rhodopseudomonas palustris (strain BisB18)).